Reading from the N-terminus, the 373-residue chain is Chaperone protein DnaJ (373 aa).

The J domain maps to 5 to 69 (DYYEVLGVNK…NKRVNYDQFG (65 aa)). The CR-type zinc finger occupies 130–212 (GTKKEISIKK…CKGKGTENKT (83 aa)). 8 residues coordinate Zn(2+): Cys-143, Cys-146, Cys-160, Cys-163, Cys-186, Cys-189, Cys-200, and Cys-203. CXXCXGXG motif repeat units follow at residues 143–150 (CHTCNGDG), 160–167 (CSYCNGAG), 186–193 (CPKCEGSG), and 200–207 (CPTCKGKG).

Belongs to the DnaJ family. As to quaternary structure, homodimer. Requires Zn(2+) as cofactor.

The protein localises to the cytoplasm. Participates actively in the response to hyperosmotic and heat shock by preventing the aggregation of stress-denatured proteins and by disaggregating proteins, also in an autonomous, DnaK-independent fashion. Unfolded proteins bind initially to DnaJ; upon interaction with the DnaJ-bound protein, DnaK hydrolyzes its bound ATP, resulting in the formation of a stable complex. GrpE releases ADP from DnaK; ATP binding to DnaK triggers the release of the substrate protein, thus completing the reaction cycle. Several rounds of ATP-dependent interactions between DnaJ, DnaK and GrpE are required for fully efficient folding. Also involved, together with DnaK and GrpE, in the DNA replication of plasmids through activation of initiation proteins. The chain is Chaperone protein DnaJ from Staphylococcus epidermidis (strain ATCC 35984 / DSM 28319 / BCRC 17069 / CCUG 31568 / BM 3577 / RP62A).